A 513-amino-acid chain; its full sequence is Probable DNA primase large subunit (513 aa).

Cys-315, Cys-398, Cys-415, and Cys-457 together coordinate [4Fe-4S] cluster.

It belongs to the eukaryotic-type primase large subunit family. Heterodimer of a small subunit and a large subunit. [4Fe-4S] cluster is required as a cofactor.

DNA primase is the polymerase that synthesizes small RNA primers for the Okazaki fragments made during discontinuous DNA replication. In Neurospora crassa (strain ATCC 24698 / 74-OR23-1A / CBS 708.71 / DSM 1257 / FGSC 987), this protein is Probable DNA primase large subunit.